The chain runs to 214 residues: Probable transaldolase (214 aa).

Catalysis depends on Lys83, which acts as the Schiff-base intermediate with substrate.

The protein belongs to the transaldolase family. Type 3B subfamily.

Its subcellular location is the cytoplasm. The enzyme catalyses D-sedoheptulose 7-phosphate + D-glyceraldehyde 3-phosphate = D-erythrose 4-phosphate + beta-D-fructose 6-phosphate. It participates in carbohydrate degradation; pentose phosphate pathway; D-glyceraldehyde 3-phosphate and beta-D-fructose 6-phosphate from D-ribose 5-phosphate and D-xylulose 5-phosphate (non-oxidative stage): step 2/3. Its function is as follows. Transaldolase is important for the balance of metabolites in the pentose-phosphate pathway. The sequence is that of Probable transaldolase from Geobacter sp. (strain M21).